Consider the following 215-residue polypeptide: Eukaryotic translation initiation factor 4E-1A (215 aa).

The span at 1–14 (MATAEPETSTNPSN) shows a compositional bias: low complexity. Positions 1-23 (MATAEPETSTNPSNSEEKNEENE) are disordered. Residues 54-55 (WQ), 100-101 (WE), 155-160 (RTKGDK), and 203-205 (TKS) each bind mRNA.

The protein belongs to the eukaryotic initiation factor 4E family. As to quaternary structure, interacts with eif4ebp3l. In terms of tissue distribution, expressed in all tissues examined, including gill, fin, heart, intestine, muscle, ovary and testis.

It localises to the cytoplasm. It is found in the nucleus. Its function is as follows. Recognizes and binds the 7-methylguanosine (m7G)-containing mRNA cap during an early step in the initiation of protein synthesis and facilitates ribosome binding by inducing the unwinding of the mRNAs secondary structures. Also promotes export of a subset of mRNAs from the nucleus to the cytoplasm. This is Eukaryotic translation initiation factor 4E-1A from Danio rerio (Zebrafish).